The primary structure comprises 347 residues: E3 ubiquitin-protein ligase ARK2C (347 aa).

Disordered regions lie at residues 23–79 (PFQR…GTLH) and 268–289 (PHKY…GEES). Positions 267–269 (FPH) are ubiquitin binding. The segment covering 276-285 (PQDSKGKKDE) has biased composition (basic and acidic residues). Positions 295 and 298 each coordinate Zn(2+). Residues 295-336 (CTICLSMLEDGEDVRRLPCMHLFHQLCVDQWLAMSKKCPICR) form an RING-type; atypical zinc finger. The ubiquitin binding stretch occupies residues 310–314 (RLPCM). Zn(2+)-binding residues include His318 and Cys321.

This sequence belongs to the Arkadia family. Monomer; binding to the ubiquitin-conjugating enzyme E2 does not trigger homodimerization. As to expression, expressed in neurons of the nervous system.

The protein resides in the nucleus. It carries out the reaction S-ubiquitinyl-[E2 ubiquitin-conjugating enzyme]-L-cysteine + [acceptor protein]-L-lysine = [E2 ubiquitin-conjugating enzyme]-L-cysteine + N(6)-ubiquitinyl-[acceptor protein]-L-lysine.. With respect to regulation, binds free ubiquitin non-covalently via its RING-type zinc finger. Ubiquitin-binding leads to enhance the E3 ubiquitin-protein ligase activity by stabilizing the ubiquitin-conjugating enzyme E2 (donor ubiquitin) in the 'closed' conformation and activating ubiquitin transfer. E3 ubiquitin-protein ligase that acts as a regulator of motor axon elongation. Required for efficient motor axon extension in the dorsal forelimb by enhancing the transcriptional responses of the SMAD1/SMAD5/SMAD8 effectors, which are activated downstream of BMP. Acts by mediating ubiquitination and degradation of SMAD inhibitors such as SMAD6, SMAD7, SKI and SNON isoform of SKIL. This Mus musculus (Mouse) protein is E3 ubiquitin-protein ligase ARK2C.